We begin with the raw amino-acid sequence, 440 residues long: GTPase Der (440 aa).

2 EngA-type G domains span residues 3–167 (PIIA…PYDR) and 176–351 (TRIA…EQYC). GTP-binding positions include 9–16 (GRPNVGKS), 56–60 (DTGGF), 119–122 (NKVD), 182–189 (GRPNVGKS), 229–233 (DTAGI), and 294–297 (NKWD). One can recognise a KH-like domain in the interval 352-436 (KRVTTGELNR…PLKLIFRGRD (85 aa)).

The protein belongs to the TRAFAC class TrmE-Era-EngA-EngB-Septin-like GTPase superfamily. EngA (Der) GTPase family. Associates with the 50S ribosomal subunit.

Its function is as follows. GTPase that plays an essential role in the late steps of ribosome biogenesis. The protein is GTPase Der of Geobacter sp. (strain M21).